The chain runs to 358 residues: Methylthioribose-1-phosphate isomerase (358 aa).

Residues 54–56 (RGA), arginine 96, and glutamine 205 each bind substrate. Catalysis depends on aspartate 246, which acts as the Proton donor. 256 to 257 (SK) serves as a coordination point for substrate.

The protein belongs to the eIF-2B alpha/beta/delta subunits family. MtnA subfamily.

It carries out the reaction 5-(methylsulfanyl)-alpha-D-ribose 1-phosphate = 5-(methylsulfanyl)-D-ribulose 1-phosphate. Its pathway is amino-acid biosynthesis; L-methionine biosynthesis via salvage pathway; L-methionine from S-methyl-5-thio-alpha-D-ribose 1-phosphate: step 1/6. Catalyzes the interconversion of methylthioribose-1-phosphate (MTR-1-P) into methylthioribulose-1-phosphate (MTRu-1-P). This is Methylthioribose-1-phosphate isomerase from Pseudomonas putida (strain GB-1).